A 258-amino-acid chain; its full sequence is Large ribosomal subunit protein bL21 (258 aa).

Positions 140–159 (KAKDAKDEAPKAAPKAEKKK) are enriched in basic and acidic residues. A disordered region spans residues 140–181 (KAKDAKDEAPKAAPKAEKKKAAPKKAKAEAAPAAADEGTRPA).

The protein belongs to the bacterial ribosomal protein bL21 family. As to quaternary structure, part of the 50S ribosomal subunit. Contacts protein L20.

Its function is as follows. This protein binds to 23S rRNA in the presence of protein L20. The chain is Large ribosomal subunit protein bL21 from Jannaschia sp. (strain CCS1).